The following is a 129-amino-acid chain: Small ribosomal subunit protein uS11 (129 aa).

It belongs to the universal ribosomal protein uS11 family. Part of the 30S ribosomal subunit. Interacts with proteins S7 and S18. Binds to IF-3.

In terms of biological role, located on the platform of the 30S subunit, it bridges several disparate RNA helices of the 16S rRNA. Forms part of the Shine-Dalgarno cleft in the 70S ribosome. The protein is Small ribosomal subunit protein uS11 of Dechloromonas aromatica (strain RCB).